The chain runs to 332 residues: Putative peptide import ATP-binding protein BMEII0206 (332 aa).

Residues 11 to 261 (LEVSNLSVDF…PLHPYTEGLL (251 aa)) form the ABC transporter domain. 47–54 (GESGSGKS) contributes to the ATP binding site.

The protein belongs to the ABC transporter superfamily. The complex is composed of two ATP-binding proteins (BMEII0205 and BMEII0206), two transmembrane proteins (BMEII0207/BMEII0208 and BMEII0209) and a solute-binding protein (BMEII0210).

The protein localises to the cell inner membrane. Functionally, probably part of an ABC transporter complex that could be involved in peptide import. Probably responsible for energy coupling to the transport system. The chain is Putative peptide import ATP-binding protein BMEII0206 from Brucella melitensis biotype 1 (strain ATCC 23456 / CCUG 17765 / NCTC 10094 / 16M).